The sequence spans 364 residues: tRNA 2-selenouridine synthase (364 aa).

In terms of domain architecture, Rhodanese spans 14–137 (LIADTPIIDV…LRQTAIQATI (124 aa)). The active-site S-selanylcysteine intermediate is C97.

Belongs to the SelU family. In terms of assembly, monomer.

The catalysed reaction is 5-methylaminomethyl-2-thiouridine(34) in tRNA + selenophosphate + (2E)-geranyl diphosphate + H2O + H(+) = 5-methylaminomethyl-2-selenouridine(34) in tRNA + (2E)-thiogeraniol + phosphate + diphosphate. It catalyses the reaction 5-methylaminomethyl-2-thiouridine(34) in tRNA + (2E)-geranyl diphosphate = 5-methylaminomethyl-S-(2E)-geranyl-thiouridine(34) in tRNA + diphosphate. It carries out the reaction 5-methylaminomethyl-S-(2E)-geranyl-thiouridine(34) in tRNA + selenophosphate + H(+) = 5-methylaminomethyl-2-(Se-phospho)selenouridine(34) in tRNA + (2E)-thiogeraniol. The enzyme catalyses 5-methylaminomethyl-2-(Se-phospho)selenouridine(34) in tRNA + H2O = 5-methylaminomethyl-2-selenouridine(34) in tRNA + phosphate. In terms of biological role, involved in the post-transcriptional modification of the uridine at the wobble position (U34) of tRNA(Lys), tRNA(Glu) and tRNA(Gln). Catalyzes the conversion of 2-thiouridine (S2U-RNA) to 2-selenouridine (Se2U-RNA). Acts in a two-step process involving geranylation of 2-thiouridine (S2U) to S-geranyl-2-thiouridine (geS2U) and subsequent selenation of the latter derivative to 2-selenouridine (Se2U) in the tRNA chain. The protein is tRNA 2-selenouridine synthase of Escherichia coli (strain ATCC 8739 / DSM 1576 / NBRC 3972 / NCIMB 8545 / WDCM 00012 / Crooks).